The primary structure comprises 117 residues: Large ribosomal subunit protein bL20 (117 aa).

The protein belongs to the bacterial ribosomal protein bL20 family.

Functionally, binds directly to 23S ribosomal RNA and is necessary for the in vitro assembly process of the 50S ribosomal subunit. It is not involved in the protein synthesizing functions of that subunit. The chain is Large ribosomal subunit protein bL20 from Rickettsia africae (strain ESF-5).